A 552-amino-acid polypeptide reads, in one-letter code: WAP, Kazal, immunoglobulin, Kunitz and NTR domain-containing protein 1 (552 aa).

The signal sequence occupies residues 1–25 (MPAPQPFLPLLFVFVLIHLTSETNL). Positions 29 to 82 (PGSHPGMCPNELSPHLWVDAQSTCERECTGDQDCAASEKCCTNVCGLQSCVAAR) constitute a WAP domain. Cystine bridges form between Cys36-Cys69, Cys52-Cys73, Cys56-Cys68, Cys62-Cys78, Cys120-Cys150, Cys124-Cys143, Cys132-Cys161, Cys211-Cys267, Cys303-Cys355, Cys310-Cys338, Cys330-Cys351, Cys363-Cys413, Cys372-Cys396, Cys388-Cys409, Cys421-Cys493, Cys424-Cys495, and Cys435-Cys544. In terms of domain architecture, Kazal-like spans 112–163 (WDGQPVCRCRDRCEKEPSFTCASDGLTYYNRCYMDAEACLRGLHLHVVPCKH). Residues 190-283 (PALYNSPSPQ…GLLRADFPLS (94 aa)) enclose the Ig-like C2-type domain. BPTI/Kunitz inhibitor domains are found at residues 289–355 (TTQD…QQAC) and 363–413 (CALP…EDAC). Residues 413–544 (CPVPRTPPCR…IVELLEKKAC (132 aa)) form the NTR domain. A glycan (N-linked (GlcNAc...) asparagine) is linked at Asn497.

It belongs to the WFIKKN family.

It localises to the secreted. Its function is as follows. Protease-inhibitor that contains multiple distinct protease inhibitor domains. Probably has serine protease- and metalloprotease-inhibitor activity. The chain is WAP, Kazal, immunoglobulin, Kunitz and NTR domain-containing protein 1 (Wfikkn1) from Mus musculus (Mouse).